We begin with the raw amino-acid sequence, 419 residues long: L-rhamnose isomerase (419 aa).

Mn(2+) contacts are provided by His-262, Asp-294, and Asp-296.

It belongs to the rhamnose isomerase family. As to quaternary structure, homotetramer. Mn(2+) is required as a cofactor.

It localises to the cytoplasm. The catalysed reaction is L-rhamnopyranose = L-rhamnulose. The protein operates within carbohydrate degradation; L-rhamnose degradation; glycerone phosphate from L-rhamnose: step 1/3. Its function is as follows. Catalyzes the interconversion of L-rhamnose and L-rhamnulose. In Salmonella typhimurium (strain LT2 / SGSC1412 / ATCC 700720), this protein is L-rhamnose isomerase.